A 97-amino-acid polypeptide reads, in one-letter code: NELL2-interacting cell ontogeny regulator 1 (97 aa).

An N-terminal signal peptide occupies residues 1–35; that stretch reads MAPLPPCGPPRSPPPRLLLLLLLLSATLLGAPARA.

It belongs to the NICOL family. Interacts with NELL2; triggers epididymal differentiation. Interacts with cell surface receptor TFRC; the interaction mediates uptake of NICOL1 into fibroblasts.

Its subcellular location is the secreted. It localises to the cytoplasm. It is found in the perinuclear region. In terms of biological role, mRNA-binding protein which interacts with a range of target mRNAs including SERPINE1, ACTA2, CCN2 and COL4A1 and may promote extracellular matrix production. Binds to the 3'-UTR of SERPINE1 mRNA and stabilizes the mRNA, possibly by competing for binding with SERBP1 and preventing SERBP1-mediated mRNA degradation. Also binds to the 3'-UTR of ACTA2. Testis-derived lumicrine factor that triggers epididymal differentiation and sperm maturation. This chain is NELL2-interacting cell ontogeny regulator 1, found in Bos taurus (Bovine).